The sequence spans 226 residues: Fibronectin type III domain-containing protein 10 (226 aa).

The first 20 residues, 1–20 (MRAPPLLLLLAACAPPPCAA), serve as a signal peptide directing secretion. Residues 21-182 (AAPTPPGWEP…FTAEPAGMQD (162 aa)) lie on the Extracellular side of the membrane. Residues 74 to 166 (PAGRSLRASV…PAAAAPETPE (93 aa)) form the Fibronectin type-III domain. 2 N-linked (GlcNAc...) asparagine glycosylation sites follow: Asn-86 and Asn-109. The chain crosses the membrane as a helical span at residues 183-203 (IVVAMTAVGGSICVMLVVICL). The Cytoplasmic segment spans residues 204-226 (LVAYITENLMRPALARPGLRRHP).

It localises to the membrane. This Homo sapiens (Human) protein is Fibronectin type III domain-containing protein 10 (FNDC10).